An 85-amino-acid polypeptide reads, in one-letter code: Large ribosomal subunit protein bL27 (85 aa).

The disordered stretch occupies residues 1 to 21; the sequence is MAHKKAAGSSRNGRDSESKRL.

Belongs to the bacterial ribosomal protein bL27 family.

The chain is Large ribosomal subunit protein bL27 from Chromohalobacter salexigens (strain ATCC BAA-138 / DSM 3043 / CIP 106854 / NCIMB 13768 / 1H11).